A 241-amino-acid polypeptide reads, in one-letter code: Dihydropteridine reductase (241 aa).

Leucine 11–alanine 35 is a binding site for NADP(+). N6-succinyllysine occurs at positions 70, 76, 93, and 99. The active-site Proton acceptor is tyrosine 147. At serine 170 the chain carries Phosphoserine.

The protein belongs to the short-chain dehydrogenases/reductases (SDR) family. As to quaternary structure, homodimer.

It catalyses the reaction 5,6,7,8-tetrahydropteridine + NAD(+) = 6,7-dihydropteridine + NADH + H(+). It carries out the reaction 5,6,7,8-tetrahydropteridine + NADP(+) = 6,7-dihydropteridine + NADPH + H(+). Its function is as follows. Catalyzes the conversion of quinonoid dihydrobiopterin into tetrahydrobiopterin. The chain is Dihydropteridine reductase (Qdpr) from Rattus norvegicus (Rat).